Here is a 291-residue protein sequence, read N- to C-terminus: Tobamovirus multiplication protein 1 (291 aa).

Over M1–D3 the chain is Cytoplasmic. The chain crosses the membrane as a helical span at residues S4 to W24. The Extracellular segment spans residues D25–G36. N28 carries N-linked (GlcNAc...) asparagine glycosylation. The helical transmembrane segment at I37 to I57 threads the bilayer. Over R58–N78 the chain is Cytoplasmic. A helical membrane pass occupies residues F79–H99. Residues P100 to C104 are Extracellular-facing. Residues W105–F125 form a helical membrane-spanning segment. Topologically, residues W126–T144 are cytoplasmic. Residues Y145–V165 traverse the membrane as a helical segment. At H166–E172 the chain is on the extracellular side. N168 carries an N-linked (GlcNAc...) asparagine glycan. Residues L173–Y193 form a helical membrane-spanning segment. Over G194 to S220 the chain is Cytoplasmic. The helical transmembrane segment at V221–F241 threads the bilayer. At D242 to P253 the chain is on the extracellular side. Residues V254–I274 traverse the membrane as a helical segment. Topologically, residues L275 to Q291 are cytoplasmic.

It belongs to the plant tobamovirus multiplication TOM1 protein family. In terms of assembly, constituent of tobamovirus replication complex. Interacts with TOM2A and with the helicase domain of tobamovirus-encoded replication proteins.

It localises to the vacuole membrane. Necessary for the efficient intracellular multiplication of tobamoviruses, probably being a membrane anchor promoting the formation of the replication complex. This is Tobamovirus multiplication protein 1 (TOM1) from Arabidopsis thaliana (Mouse-ear cress).